A 152-amino-acid chain; its full sequence is 1,4-dihydroxy-2-naphthoyl-CoA hydrolase (152 aa).

Residue Asp-20 is part of the active site.

Belongs to the 4-hydroxybenzoyl-CoA thioesterase family. DHNA-CoA hydrolase subfamily.

The catalysed reaction is 1,4-dihydroxy-2-naphthoyl-CoA + H2O = 1,4-dihydroxy-2-naphthoate + CoA + H(+). The protein operates within cofactor biosynthesis; phylloquinone biosynthesis. Its pathway is quinol/quinone metabolism; 1,4-dihydroxy-2-naphthoate biosynthesis; 1,4-dihydroxy-2-naphthoate from chorismate: step 7/7. Functionally, catalyzes the hydrolysis of 1,4-dihydroxy-2-naphthoyl-CoA (DHNA-CoA) to 1,4-dihydroxy-2-naphthoate (DHNA), a reaction involved in phylloquinone (vitamin K1) biosynthesis. This chain is 1,4-dihydroxy-2-naphthoyl-CoA hydrolase, found in Parasynechococcus marenigrum (strain WH8102).